The primary structure comprises 353 residues: Photosystem II D2 protein (353 aa).

Threonine 2 carries the post-translational modification N-acetylthreonine. Threonine 2 carries the phosphothreonine modification. Residues 41 to 61 (CAYFALGGWFTGTTFVTSWYT) form a helical membrane-spanning segment. Chlorophyll a is bound at residue histidine 118. A helical membrane pass occupies residues 125–141 (GFMLRQFELARSVQLRP). Glutamine 130 and asparagine 143 together coordinate pheophytin a. Residues 153-166 (VFVSVFLIYPLGQS) form a helical membrane-spanning segment. Histidine 198 contacts chlorophyll a. The helical transmembrane segment at 208–228 (AALLCAIHGATVENTLFEDGD) threads the bilayer. Histidine 215 and phenylalanine 262 together coordinate a plastoquinone. Histidine 215 lines the Fe cation pocket. Residue histidine 269 coordinates Fe cation. Residues 279–295 (GLWMSALGVVGLALNLR) traverse the membrane as a helical segment.

The protein belongs to the reaction center PufL/M/PsbA/D family. PSII is composed of 1 copy each of membrane proteins PsbA, PsbB, PsbC, PsbD, PsbE, PsbF, PsbH, PsbI, PsbJ, PsbK, PsbL, PsbM, PsbT, PsbX, PsbY, PsbZ, Psb30/Ycf12, at least 3 peripheral proteins of the oxygen-evolving complex and a large number of cofactors. It forms dimeric complexes. The D1/D2 heterodimer binds P680, chlorophylls that are the primary electron donor of PSII, and subsequent electron acceptors. It shares a non-heme iron and each subunit binds pheophytin, quinone, additional chlorophylls, carotenoids and lipids. There is also a Cl(-1) ion associated with D1 and D2, which is required for oxygen evolution. The PSII complex binds additional chlorophylls, carotenoids and specific lipids. serves as cofactor.

It localises to the plastid. Its subcellular location is the chloroplast thylakoid membrane. The catalysed reaction is 2 a plastoquinone + 4 hnu + 2 H2O = 2 a plastoquinol + O2. Its function is as follows. Photosystem II (PSII) is a light-driven water:plastoquinone oxidoreductase that uses light energy to abstract electrons from H(2)O, generating O(2) and a proton gradient subsequently used for ATP formation. It consists of a core antenna complex that captures photons, and an electron transfer chain that converts photonic excitation into a charge separation. The D1/D2 (PsbA/PsbD) reaction center heterodimer binds P680, the primary electron donor of PSII as well as several subsequent electron acceptors. D2 is needed for assembly of a stable PSII complex. The sequence is that of Photosystem II D2 protein from Citrus sinensis (Sweet orange).